The chain runs to 345 residues: NADH-quinone oxidoreductase subunit H 1 (345 aa).

Transmembrane regions (helical) follow at residues 11-31, 50-70, 84-104, 115-135, 161-181, 187-207, 248-268, 277-297, and 309-329; these read IILT…ISLL, PNVV…KYIF, FFLA…VIPF, VAIL…IMGG, LGLI…SHIV, AFGL…LFFI, YIAI…GWLS, VFWM…VKAI, and IGWK…AFLA.

This sequence belongs to the complex I subunit 1 family. As to quaternary structure, NDH-1 is composed of 14 different subunits. Subunits NuoA, H, J, K, L, M, N constitute the membrane sector of the complex.

It is found in the cell inner membrane. It carries out the reaction a quinone + NADH + 5 H(+)(in) = a quinol + NAD(+) + 4 H(+)(out). Functionally, NDH-1 shuttles electrons from NADH, via FMN and iron-sulfur (Fe-S) centers, to quinones in the respiratory chain. The immediate electron acceptor for the enzyme in this species is believed to be ubiquinone. Couples the redox reaction to proton translocation (for every two electrons transferred, four hydrogen ions are translocated across the cytoplasmic membrane), and thus conserves the redox energy in a proton gradient. This subunit may bind ubiquinone. The sequence is that of NADH-quinone oxidoreductase subunit H 1 from Cereibacter sphaeroides (strain ATCC 17023 / DSM 158 / JCM 6121 / CCUG 31486 / LMG 2827 / NBRC 12203 / NCIMB 8253 / ATH 2.4.1.) (Rhodobacter sphaeroides).